We begin with the raw amino-acid sequence, 272 residues long: 3-methyl-2-oxobutanoate hydroxymethyltransferase (272 aa).

Residues Asp43 and Asp82 each contribute to the Mg(2+) site. 3-methyl-2-oxobutanoate-binding positions include 43-44 (DS), Asp82, and Lys112. A Mg(2+)-binding site is contributed by Glu114. Glu179 functions as the Proton acceptor in the catalytic mechanism.

It belongs to the PanB family. As to quaternary structure, homodecamer; pentamer of dimers. It depends on Mg(2+) as a cofactor.

The protein localises to the cytoplasm. The enzyme catalyses 3-methyl-2-oxobutanoate + (6R)-5,10-methylene-5,6,7,8-tetrahydrofolate + H2O = 2-dehydropantoate + (6S)-5,6,7,8-tetrahydrofolate. It participates in cofactor biosynthesis; (R)-pantothenate biosynthesis; (R)-pantoate from 3-methyl-2-oxobutanoate: step 1/2. Its function is as follows. Catalyzes the reversible reaction in which hydroxymethyl group from 5,10-methylenetetrahydrofolate is transferred onto alpha-ketoisovalerate to form ketopantoate. The polypeptide is 3-methyl-2-oxobutanoate hydroxymethyltransferase (Staphylococcus aureus (strain JH1)).